A 273-amino-acid chain; its full sequence is MCLLALGFLLGILQPASGQFPRACASSESLLRKECCPLWAGDGSPCGELSGRGSCQEILLSRAPLGPQFPFTGVDDREDWPAVFYNRTCQCNSNFMGFNCGECRFGFSGPNCAERRMRMRRSIFQLSTREKNKFLAYLNLAKHTPSQDYVIATGTYAQMNNGLTPMFRNISVYDLFVWMHYYVSRDTLLGDASVWRDIDFAHEAPGFLPWHRLFLVLWEHEIQKITGDENFTIPYWDWRDAEGCDVCTDELMGDRHPTNPQLLSPASFFSSWQ.

The signal sequence occupies residues 1-18 (MCLLALGFLLGILQPASG). N86 and N169 each carry an N-linked (GlcNAc...) asparagine glycan. Residues H180, H202, and H211 each contribute to the Cu cation site. Residue N230 is glycosylated (N-linked (GlcNAc...) asparagine).

It belongs to the tyrosinase family. The cofactor is Cu(2+).

The protein localises to the melanosome membrane. The enzyme catalyses 2 L-dopa + O2 = 2 L-dopaquinone + 2 H2O. The catalysed reaction is L-tyrosine + O2 = L-dopaquinone + H2O. Its function is as follows. This is a copper-containing oxidase that functions in the formation of pigments such as melanins and other polyphenolic compounds. The chain is Tyrosinase (TYR) from Pelodiscus sinensis (Chinese softshell turtle).